The chain runs to 360 residues: Mannan endo-1,4-beta-mannosidase (360 aa).

A signal peptide spans 1–24 (MLKKLAVCLSIVLLLLGAASPISA). The GH26 domain maps to 36–347 (QTTKDIMNWL…YQNSWTLNKG (312 aa)). His129 contacts substrate. Glu191 functions as the Proton donor in the catalytic mechanism. Substrate contacts are provided by Trp196 and Tyr266. Glu290 serves as the catalytic Nucleophile.

The protein belongs to the glycosyl hydrolase 26 family. In terms of assembly, homodimer.

The protein localises to the secreted. It carries out the reaction Random hydrolysis of (1-&gt;4)-beta-D-mannosidic linkages in mannans, galactomannans and glucomannans.. Involved in the degradation of glucomannan. Catalyzes the endo hydrolysis of beta-1,4-linked mannan, galactomannan and glucomannan. The polypeptide is Mannan endo-1,4-beta-mannosidase (Bacillus subtilis).